Consider the following 80-residue polypeptide: Exodeoxyribonuclease 7 small subunit (80 aa).

It belongs to the XseB family. As to quaternary structure, heterooligomer composed of large and small subunits.

Its subcellular location is the cytoplasm. The catalysed reaction is Exonucleolytic cleavage in either 5'- to 3'- or 3'- to 5'-direction to yield nucleoside 5'-phosphates.. Functionally, bidirectionally degrades single-stranded DNA into large acid-insoluble oligonucleotides, which are then degraded further into small acid-soluble oligonucleotides. The polypeptide is Exodeoxyribonuclease 7 small subunit (Salmonella paratyphi B (strain ATCC BAA-1250 / SPB7)).